A 341-amino-acid chain; its full sequence is L-threonine 3-dehydrogenase (341 aa).

Cys-38 lines the Zn(2+) pocket. Catalysis depends on charge relay system residues Thr-40 and His-43. Zn(2+) is bound by residues His-63, Glu-64, Cys-93, Cys-96, Cys-99, and Cys-107. Residues Ile-175, Asp-195, Arg-200, 262–264, and 286–287 each bind NAD(+); these read LGI and IY.

The protein belongs to the zinc-containing alcohol dehydrogenase family. Homotetramer. Requires Zn(2+) as cofactor.

Its subcellular location is the cytoplasm. It carries out the reaction L-threonine + NAD(+) = (2S)-2-amino-3-oxobutanoate + NADH + H(+). Its pathway is amino-acid degradation; L-threonine degradation via oxydo-reductase pathway; glycine from L-threonine: step 1/2. Its function is as follows. Catalyzes the NAD(+)-dependent oxidation of L-threonine to 2-amino-3-ketobutyrate. In Pseudoalteromonas translucida (strain TAC 125), this protein is L-threonine 3-dehydrogenase.